The chain runs to 743 residues: Sulfhydryl oxidase 1 (743 aa).

The signal sequence occupies residues 1–42; the sequence is MWRRRARSGGGGGGGGGGAAPRCRWWPAVLALLAAALPAARS. A Thioredoxin domain is found at 43-166; that stretch reads RSLYSPSDPL…LRRAIITNLE (124 aa). Catalysis depends on nucleophile residues Cys80 and Cys83. 2 disulfide bridges follow: Cys80/Cys83 and Cys111/Cys120. 5 N-linked (GlcNAc...) asparagine glycosylation sites follow: Asn254, Asn288, Asn295, Asn371, and Asn401. A disulfide bridge links Cys407 with Cys419. Residues 410 to 513 form the ERV/ALR sulfhydryl oxidase domain; that stretch reads SEPHFRGYPC…EDPQFPKLQW (104 aa). Residues Arg415, Trp422, His426, Glu461, His465, 488-495, Lys510, and Trp513 contribute to the FAD site; that span reads WSHHNEVN. Cys459 and Cys462 are joined by a disulfide. Cysteines 519 and 522 form a disulfide. The segment at 567–617 is disordered; it reads ASARLSTAGLREKEEEERKEEEEEGEKETEKPHREGETGRPGSSELRRPSI. The segment covering 580–593 has biased composition (acidic residues); that stretch reads EEEERKEEEEEGEK. Positions 594 to 604 are enriched in basic and acidic residues; that stretch reads ETEKPHREGET. Residues 707-727 traverse the membrane as a helical segment; sequence SLCIALYFLSSMCLLGMYTFF.

It belongs to the quiescin-sulfhydryl oxidase (QSOX) family. FAD is required as a cofactor. In terms of processing, N-glycosylated. O-glycosylated on Thr and Ser residues.

Its subcellular location is the golgi apparatus membrane. It localises to the secreted. The catalysed reaction is 2 R'C(R)SH + O2 = R'C(R)S-S(R)CR' + H2O2. In terms of biological role, catalyzes the oxidation of sulfhydryl groups in peptide and protein thiols to disulfides with the reduction of oxygen to hydrogen peroxide. Plays a role in disulfide bond formation in a variety of extracellular proteins. In fibroblasts, required for normal incorporation of laminin into the extracellular matrix, and thereby for normal cell-cell adhesion and cell migration. This is Sulfhydryl oxidase 1 (QSOX1) from Gallus gallus (Chicken).